The chain runs to 505 residues: uncharacterized protein (505 aa).

Residues Met1–His52 are disordered. The segment covering Asp18–Asp32 has biased composition (polar residues). The next 10 membrane-spanning stretches (helical) occupy residues Phe141–Phe161, Ala173–Phe193, Gly208–Ala228, Leu235–Phe255, Ile265–Ser285, Ser290–Val310, Val326–Phe346, Gly362–Phe382, Phe389–Phe409, and Trp415–Val435. Ser463, Ser466, and Ser467 each carry phosphoserine.

The protein belongs to the SLC35F solute transporter family.

It localises to the golgi apparatus membrane. This is an uncharacterized protein from Schizosaccharomyces pombe (strain 972 / ATCC 24843) (Fission yeast).